The primary structure comprises 323 residues: AA9 family lytic polysaccharide monooxygenase A (323 aa).

The signal sequence occupies residues M1–A19. 2 residues coordinate Cu(2+): H20 and H90. C59 and C175 are oxidised to a cystine. O2-binding residues include H161 and Q170. Y172 is a Cu(2+) binding site. A glycan (N-linked (GlcNAc...) asparagine) is linked at N215. The 37-residue stretch at A287–L323 folds into the CBM1 domain.

The protein belongs to the polysaccharide monooxygenase AA9 family. Cu(2+) is required as a cofactor.

It is found in the secreted. The catalysed reaction is [(1-&gt;4)-beta-D-glucosyl]n+m + reduced acceptor + O2 = 4-dehydro-beta-D-glucosyl-[(1-&gt;4)-beta-D-glucosyl]n-1 + [(1-&gt;4)-beta-D-glucosyl]m + acceptor + H2O.. Lytic polysaccharide monooxygenase (LPMO) that depolymerizes crystalline and amorphous polysaccharides via the oxidation of scissile alpha- or beta-(1-4)-glycosidic bonds, yielding C1 and C4 oxidation products. Catalysis by LPMOs requires the reduction of the active-site copper from Cu(II) to Cu(I) by a reducing agent and H(2)O(2) or O(2) as a cosubstrate. This is AA9 family lytic polysaccharide monooxygenase A from Botryotinia fuckeliana (strain B05.10) (Noble rot fungus).